Reading from the N-terminus, the 290-residue chain is Small ribosomal subunit biogenesis GTPase RsgA (290 aa).

In terms of domain architecture, CP-type G spans 62 to 213; sequence KNSLVRPPIV…IADTPGFSSL (152 aa). GTP contacts are provided by residues 111-114 and 156-164; these read SKLD and GQTGVGKST. The Zn(2+) site is built by Cys237, Cys242, His244, and Cys250.

Belongs to the TRAFAC class YlqF/YawG GTPase family. RsgA subfamily. In terms of assembly, monomer. Associates with 30S ribosomal subunit, binds 16S rRNA. The cofactor is Zn(2+).

It is found in the cytoplasm. In terms of biological role, one of several proteins that assist in the late maturation steps of the functional core of the 30S ribosomal subunit. Helps release RbfA from mature subunits. May play a role in the assembly of ribosomal proteins into the subunit. Circularly permuted GTPase that catalyzes slow GTP hydrolysis, GTPase activity is stimulated by the 30S ribosomal subunit. The sequence is that of Small ribosomal subunit biogenesis GTPase RsgA from Streptococcus agalactiae serotype V (strain ATCC BAA-611 / 2603 V/R).